We begin with the raw amino-acid sequence, 274 residues long: AA9 family lytic polysaccharide monooxygenase A (274 aa).

The signal sequence occupies residues 1–22; it reads MHVPQFISTGALLALLARPAAA. Residue His23 coordinates Cu(2+). Cys63 and Cys194 form a disulfide bridge. Residues Gly67, Asp98, and Ser100 each coordinate (1,4-beta-D-glucosyl)n. His101 contributes to the Cu(2+) binding site. His174 lines the O2 pocket. Asp177 contacts (1,4-beta-D-glucosyl)n. Tyr191 is a binding site for Cu(2+).

The protein belongs to the polysaccharide monooxygenase AA9 family. Cu(2+) is required as a cofactor.

Its subcellular location is the secreted. It carries out the reaction [(1-&gt;4)-beta-D-glucosyl]n+m + reduced acceptor + O2 = 4-dehydro-beta-D-glucosyl-[(1-&gt;4)-beta-D-glucosyl]n-1 + [(1-&gt;4)-beta-D-glucosyl]m + acceptor + H2O.. Functionally, lytic polysaccharide monooxygenase (LPMO) that depolymerizes crystalline and amorphous polysaccharides via the oxidation of scissile alpha- or beta-(1-4)-glycosidic bonds, yielding C4 oxidation products. Catalysis by LPMOs requires the reduction of the active-site copper from Cu(II) to Cu(I) by a reducing agent and H(2)O(2) or O(2) as a cosubstrate. Cleaves a range of polysaccharides, including cellulose, xyloglucan, mixed-linkage glucan and glucomannan. The sequence is that of AA9 family lytic polysaccharide monooxygenase A from Collariella virescens (Soil fungus).